We begin with the raw amino-acid sequence, 32 residues long: uncharacterized protein (32 aa).

This is an uncharacterized protein from Haloarcula hispanica (His1V).